The primary structure comprises 245 residues: tRNA1(Val) (adenine(37)-N6)-methyltransferase (245 aa).

It belongs to the methyltransferase superfamily. tRNA (adenine-N(6)-)-methyltransferase family.

It is found in the cytoplasm. The enzyme catalyses adenosine(37) in tRNA1(Val) + S-adenosyl-L-methionine = N(6)-methyladenosine(37) in tRNA1(Val) + S-adenosyl-L-homocysteine + H(+). Its function is as follows. Specifically methylates the adenine in position 37 of tRNA(1)(Val) (anticodon cmo5UAC). The chain is tRNA1(Val) (adenine(37)-N6)-methyltransferase from Salmonella paratyphi A (strain ATCC 9150 / SARB42).